The primary structure comprises 363 residues: Wortmanamides biosynthesis cluster protein C (363 aa).

Transmembrane regions (helical) follow at residues 15–35 (FVTL…RFVA), 48–68 (WLAV…LMAI), 95–115 (IAGL…ILAF), 129–149 (ICIY…CIFQ), 175–195 (ILGG…LAMI), 210–230 (VTVL…KIAV), and 237–257 (LYAF…ALLC). Residues 293-312 (SSSKNSRKHGPYDSDQSPGP) are disordered. N321 is a glycosylation site (N-linked (GlcNAc...) asparagine). The interval 344–363 (SPITHPQAYSKQTTRQFDVV) is disordered.

This sequence belongs to the SAT4 family.

Its subcellular location is the membrane. It functions in the pathway secondary metabolite biosynthesis. Functionally, part of the gene cluster that mediates the biosynthesis of wortmanamides A and B, reduced long-chain polyketides amidated with a specific omega-amino acid, 5-aminopentanoic acid (5PA). The PKS modules of TwmB are involved in the synthesis of the polyketide backbone, whereas the non-canonical C domain of TwmB is a bonafide condensation domain that specifically selects 5PA and catalyzes amidation to release polyketide chain. The C domain clearly prefers C16 and C18 fatty acyl substrates, which is consistent with simultaneous formation of both octaketide and nonaketide acyl amides wortmanamides A and B. Because TwmB lacks a designated enoylreductase (ER) domain, the required activity is provided the enoyl reductase TwmE. The roles of the remaining enzymes have still to be clarified. The protein is Wortmanamides biosynthesis cluster protein C of Talaromyces wortmannii (Penicillium wortmannii).